The sequence spans 213 residues: Ion-translocating oxidoreductase complex subunit A (213 aa).

Topologically, residues 1-24 are periplasmic; it reads MLLLWQSRIMPGSEANIYITMTEY. Residues 25-45 form a helical membrane-spanning segment; sequence LLLLIGTVLVNNFVLVKFLGL. Residues 46 to 58 lie on the Cytoplasmic side of the membrane; it reads CPFMGVSKKLETA. The helical transmembrane segment at 59–79 threads the bilayer; it reads IGMGLATTFVLTLASVCAYLV. Residues 80-86 are Periplasmic-facing; the sequence is ESYVLRP. A helical membrane pass occupies residues 87-107; that stretch reads LGIEYLRTMSFILVIAVVVQF. Over 108-121 the chain is Cytoplasmic; sequence TEMVVHKTSPTLYR. Residues 122–142 traverse the membrane as a helical segment; sequence LLGIFLPLITTNCAVLGVALL. The Periplasmic portion of the chain corresponds to 143–153; the sequence is NINENHNFIQS. Residues 154–174 traverse the membrane as a helical segment; the sequence is IIYGFGAAVGFSLVLILFASM. Residues 175–190 lie on the Cytoplasmic side of the membrane; sequence RERIHVADVPAPFKGA. The chain crosses the membrane as a helical span at residues 191–211; sequence SIAMITAGLMSLAFMGFTGLV. Residues 212-213 lie on the Periplasmic side of the membrane; it reads KL.

The protein belongs to the NqrDE/RnfAE family. The complex is composed of six subunits: RnfA, RnfB, RnfC, RnfD, RnfE and RnfG.

The protein localises to the cell inner membrane. Functionally, part of a membrane-bound complex that couples electron transfer with translocation of ions across the membrane. This chain is Ion-translocating oxidoreductase complex subunit A, found in Vibrio cholerae serotype O1 (strain ATCC 39541 / Classical Ogawa 395 / O395).